We begin with the raw amino-acid sequence, 248 residues long: Metallo-beta-lactamase type 2 (248 aa).

The first 21 residues, 1-21, serve as a signal peptide directing secretion; that stretch reads MKGLKGLLVLALGFTGLQVFG. Residues His97, His99, Asp101, His160, and Cys179 each contribute to the Zn(2+) site. Lys182 provides a ligand contact to substrate. His221 serves as a coordination point for Zn(2+).

It belongs to the metallo-beta-lactamase superfamily. Class-B beta-lactamase family. Monomer. Requires Zn(2+) as cofactor.

Its subcellular location is the periplasm. It catalyses the reaction a beta-lactam + H2O = a substituted beta-amino acid. Functionally, confers resistance to the different beta-lactams antibiotics (penicillin, cephalosporin and carbapenem) via the hydrolysis of the beta-lactam ring. This is Metallo-beta-lactamase type 2 (blaB8) from Elizabethkingia meningoseptica (Chryseobacterium meningosepticum).